Consider the following 163-residue polypeptide: uncharacterized protein (163 aa).

Residues 7–162 (ISISAVKLPQ…NVVYMRLEMS (156 aa)) form the N-acetyltransferase domain.

It belongs to the acetyltransferase family.

Its subcellular location is the cytoplasm. The protein localises to the nucleus. This is an uncharacterized protein from Schizosaccharomyces pombe (strain 972 / ATCC 24843) (Fission yeast).